A 582-amino-acid polypeptide reads, in one-letter code: Protein bps2 (582 aa).

Residue 28-35 participates in ATP binding; it reads APNAYGKT. Positions 243–281 form a coiled coil; the sequence is RQSYERQLQEINAQLQKITAQRNEAEIEIRLLEKVLDQI. In terms of domain architecture, Zinc-hook spans 243 to 351; the sequence is RQSYERQLQE…KLKELDQISS (109 aa). Residues cysteine 292 and cysteine 295 each contribute to the Zn(2+) site. Positions 320-351 form a coiled coil; that stretch reads SLYAGIKKEADELLSKKSEIEKKLKELDQISS.

In Acidianus ambivalens (Desulfurolobus ambivalens), this protein is Protein bps2 (bps2).